A 121-amino-acid chain; its full sequence is ATP synthase epsilon chain (121 aa).

The protein belongs to the ATPase epsilon chain family. F-type ATPases have 2 components, CF(1) - the catalytic core - and CF(0) - the membrane proton channel. CF(1) has five subunits: alpha(3), beta(3), gamma(1), delta(1), epsilon(1). CF(0) has three main subunits: a, b and c.

It is found in the cell membrane. In terms of biological role, produces ATP from ADP in the presence of a proton gradient across the membrane. The polypeptide is ATP synthase epsilon chain (atpC) (Mycobacterium bovis (strain ATCC BAA-935 / AF2122/97)).